We begin with the raw amino-acid sequence, 426 residues long: Serine--tRNA ligase (426 aa).

An L-serine-binding site is contributed by 233–235 (TAE). 264 to 266 (RSE) is a binding site for ATP. Glutamate 287 contacts L-serine. An ATP-binding site is contributed by 351-354 (EISS). Serine 387 lines the L-serine pocket.

Belongs to the class-II aminoacyl-tRNA synthetase family. Type-1 seryl-tRNA synthetase subfamily. In terms of assembly, homodimer. The tRNA molecule binds across the dimer.

The protein localises to the cytoplasm. It carries out the reaction tRNA(Ser) + L-serine + ATP = L-seryl-tRNA(Ser) + AMP + diphosphate + H(+). The catalysed reaction is tRNA(Sec) + L-serine + ATP = L-seryl-tRNA(Sec) + AMP + diphosphate + H(+). Its pathway is aminoacyl-tRNA biosynthesis; selenocysteinyl-tRNA(Sec) biosynthesis; L-seryl-tRNA(Sec) from L-serine and tRNA(Sec): step 1/1. Catalyzes the attachment of serine to tRNA(Ser). Is also able to aminoacylate tRNA(Sec) with serine, to form the misacylated tRNA L-seryl-tRNA(Sec), which will be further converted into selenocysteinyl-tRNA(Sec). This is Serine--tRNA ligase from Ectopseudomonas mendocina (strain ymp) (Pseudomonas mendocina).